Here is a 409-residue protein sequence, read N- to C-terminus: Peptidase T (409 aa).

H78 contacts Zn(2+). Residue D80 is part of the active site. D140 contributes to the Zn(2+) binding site. E173 functions as the Proton acceptor in the catalytic mechanism. The Zn(2+) site is built by E174, D196, and H379.

Belongs to the peptidase M20B family. Zn(2+) is required as a cofactor.

It is found in the cytoplasm. It catalyses the reaction Release of the N-terminal residue from a tripeptide.. Its function is as follows. Cleaves the N-terminal amino acid of tripeptides. In Escherichia coli O139:H28 (strain E24377A / ETEC), this protein is Peptidase T.